A 259-amino-acid polypeptide reads, in one-letter code: MNIDPVALKIGLLEIRWYSLAYIIGILFAYWYVQKIDKYKVFTPESYKSIISWWVTGMILGGRIGYILFYNLNFYMSFPIEMFKLWKGGMSFHGASLGLFCTMYIFCKKYKIKFLSAIDLCLCAVPVGIFLGRIANFINGELYGKVTNTRFGMIFQNSGDFFYRHPSQLYEAFFEGLLLFVVMNLLFFFTKVKSYQGMLFTIFMIWYGIVRFFIEFVREPDVQVGYILFNWITMGQLLSFIMVILGICILRLSRMSHNI.

The next 4 helical transmembrane spans lie at 10–30, 50–70, 86–106, and 112–132; these read IGLL…LFAY, IISW…ILFY, WKGG…MYIF, and IKFL…IFLG. Arg-133 provides a ligand contact to a 1,2-diacyl-sn-glycero-3-phospho-(1'-sn-glycerol). Transmembrane regions (helical) follow at residues 169–189, 197–217, and 227–247; these read LYEA…LFFF, GMLF…IEFV, and ILFN…ILGI.

Belongs to the Lgt family.

The protein resides in the cell inner membrane. The catalysed reaction is L-cysteinyl-[prolipoprotein] + a 1,2-diacyl-sn-glycero-3-phospho-(1'-sn-glycerol) = an S-1,2-diacyl-sn-glyceryl-L-cysteinyl-[prolipoprotein] + sn-glycerol 1-phosphate + H(+). Its pathway is protein modification; lipoprotein biosynthesis (diacylglyceryl transfer). Functionally, catalyzes the transfer of the diacylglyceryl group from phosphatidylglycerol to the sulfhydryl group of the N-terminal cysteine of a prolipoprotein, the first step in the formation of mature lipoproteins. In Ehrlichia ruminantium (strain Gardel), this protein is Phosphatidylglycerol--prolipoprotein diacylglyceryl transferase.